A 444-amino-acid polypeptide reads, in one-letter code: Acyl-CoA (8-3)-desaturase (444 aa).

Met1 is subject to N-acetylmethionine. The Cytoplasmic segment spans residues Met1 to Gln121. In terms of domain architecture, Cytochrome b5 heme-binding spans Pro17–Ser94. A helical membrane pass occupies residues Met122–Leu142. Residues Asp143–Ala146 lie on the Lumenal side of the membrane. The chain crosses the membrane as a helical span at residues Trp147 to Leu167. Over Thr168 to Phe267 the chain is Cytoplasmic. Residues His179–His183 carry the Histidine box-1 motif. Positions His216 to His220 match the Histidine box-2 motif. A helical transmembrane segment spans residues Leu268–Ile288. Residues Gln289–Arg305 are Lumenal-facing. Residues Leu306–Val326 form a helical membrane-spanning segment. Residues Arg327–Gln444 are Cytoplasmic-facing. Residues Gln382–His386 carry the Histidine box-3 motif.

Belongs to the fatty acid desaturase type 1 family. As to expression, widely expressed. Expressed in brain, liver and thymus (at protein level). Isoform 1 seems to be more abundant than isoform 2. Expression of isoform 2 is very low in spleen and not detectable in skeletal muscle.

It is found in the endoplasmic reticulum membrane. The protein resides in the mitochondrion. The enzyme catalyses (8Z,11Z,14Z)-eicosatrienoyl-CoA + 2 Fe(II)-[cytochrome b5] + O2 + 2 H(+) = (5Z,8Z,11Z,14Z)-eicosatetraenoyl-CoA + 2 Fe(III)-[cytochrome b5] + 2 H2O. It carries out the reaction (8Z,11Z,14Z,17Z)-eicosatetraenoyl-CoA + 2 Fe(II)-[cytochrome b5] + O2 + 2 H(+) = (5Z,8Z,11Z,14Z,17Z)-eicosapentaenoyl-CoA + 2 Fe(III)-[cytochrome b5] + 2 H2O. The catalysed reaction is (11E)-octadecenoyl-CoA + 2 Fe(II)-[cytochrome b5] + O2 + 2 H(+) = (5Z,11E)-octadecadienoyl-CoA + 2 Fe(III)-[cytochrome b5] + 2 H2O. The protein operates within lipid metabolism; polyunsaturated fatty acid biosynthesis. Functionally, acts as a front-end fatty acyl-coenzyme A (CoA) desaturase that introduces a cis double bond at carbon 5 located between a preexisting double bond and the carboxyl end of the fatty acyl chain. Involved in biosynthesis of highly unsaturated fatty acids (HUFA) from the essential polyunsaturated fatty acids (PUFA) linoleic acid (LA) (18:2n-6) and alpha-linolenic acid (ALA) (18:3n-3) precursors. Specifically, desaturates dihomo-gamma-linoleoate (DGLA) (20:3n-6) and eicosatetraenoate (ETA) (20:4n-3) to generate arachidonate (AA) (20:4n-6) and eicosapentaenoate (EPA) (20:5n-3), respectively. As a rate limiting enzyme for DGLA (20:3n-6) and AA (20:4n-6)-derived eicosanoid biosynthesis, controls the metabolism of inflammatory lipids like prostaglandin E2, critical for efficient acute inflammatory response and maintenance of epithelium homeostasis. Contributes to membrane phospholipid biosynthesis by providing AA (20:4n-6) as a major acyl chain esterified into phospholipids. In particular, regulates phosphatidylinositol-4,5-bisphosphate levels, modulating inflammatory cytokine production in T-cells. Also desaturates (11E)-octadecenoate (trans-vaccenoate)(18:1n-9), a metabolite in the biohydrogenation pathway of LA (18:2n-6). Its function is as follows. Does not exhibit any catalytic activity toward 20:3n-6, but it may enhance FADS2 activity. This Papio anubis (Olive baboon) protein is Acyl-CoA (8-3)-desaturase.